The primary structure comprises 212 residues: Thymidylate kinase (212 aa).

Residue 10–17 (GLEGAGKT) participates in ATP binding.

The protein belongs to the thymidylate kinase family.

The catalysed reaction is dTMP + ATP = dTDP + ADP. In terms of biological role, phosphorylation of dTMP to form dTDP in both de novo and salvage pathways of dTTP synthesis. This Yersinia pseudotuberculosis serotype O:1b (strain IP 31758) protein is Thymidylate kinase.